We begin with the raw amino-acid sequence, 256 residues long: MKISRIAQRLDEAAVSGKATPQLTGDDAVTVREAAEIQRLLIAHRIERGARQVGLKMGFTSRAKMAQMGVSDLIWGRLTSDMWVEEGGEIDLAHYVHPRVEPEICYLLGKRLEGNVTPLEALAAVEAVAPAMEIIDSRYRDFKFSLPDVIADNASSSGFVVGAWHKPETDVSNLGMVMSFDGRAVELGTSAAILGSPIRALVAAARLAAQQGEALEAGSLILAGAATAAVALRPGISVRCEVQNLGSLSFSTTGER.

The protein belongs to the hydratase/decarboxylase family. Forms a complex with AmnF. Mg(2+) is required as a cofactor. It depends on Mn(2+) as a cofactor.

The catalysed reaction is (3E)-2-oxohex-3-enedioate + H(+) = 2-oxopent-4-enoate + CO2. Its activity is regulated as follows. Strongly inhibited by Fe(2+), Fe(3+), K(3)[Fe(CN)(6)], Ag(+) and Cu(2+). Functionally, involved in the modified meta-cleavage pathway for the 2-aminophenol catabolism. In Pseudomonas sp, this protein is 4-oxalocrotonate decarboxylase (amnE).